The chain runs to 1390 residues: DNA-directed RNA polymerase subunit beta (1390 aa).

Residues 556 to 576 (KLADQDAENDPDSDLGTKSSN) are disordered.

The protein belongs to the RNA polymerase beta chain family. In terms of assembly, the RNAP catalytic core consists of 2 alpha, 1 beta, 1 beta' and 1 omega subunit. When a sigma factor is associated with the core the holoenzyme is formed, which can initiate transcription.

The enzyme catalyses RNA(n) + a ribonucleoside 5'-triphosphate = RNA(n+1) + diphosphate. Functionally, DNA-dependent RNA polymerase catalyzes the transcription of DNA into RNA using the four ribonucleoside triphosphates as substrates. In Mycoplasmoides gallisepticum (strain R(low / passage 15 / clone 2)) (Mycoplasma gallisepticum), this protein is DNA-directed RNA polymerase subunit beta.